Consider the following 371-residue polypeptide: Histidinol-phosphate aminotransferase (371 aa).

An N6-(pyridoxal phosphate)lysine modification is found at Lys-228.

This sequence belongs to the class-II pyridoxal-phosphate-dependent aminotransferase family. Histidinol-phosphate aminotransferase subfamily. Pyridoxal 5'-phosphate serves as cofactor.

It catalyses the reaction L-histidinol phosphate + 2-oxoglutarate = 3-(imidazol-4-yl)-2-oxopropyl phosphate + L-glutamate. It functions in the pathway amino-acid biosynthesis; L-histidine biosynthesis; L-histidine from 5-phospho-alpha-D-ribose 1-diphosphate: step 7/9. This Methanococcus maripaludis (strain C5 / ATCC BAA-1333) protein is Histidinol-phosphate aminotransferase.